The following is a 608-amino-acid chain: V-type ATP synthase subunit I (608 aa).

9 consecutive transmembrane segments (helical) span residues 308 to 325 (ISFI…MIIG), 327 to 346 (AAYG…SFLL), 356 to 376 (GLIF…GTWF), 405 to 425 (IIFI…VWNF), 438 to 458 (IAQI…LNLI), 464 to 484 (FPMY…VFVF), 495 to 515 (CILK…SGFA), 517 to 537 (IISY…SASF), and 550 to 570 (IGLI…NIML).

It belongs to the V-ATPase 116 kDa subunit family.

It is found in the cell membrane. Produces ATP from ADP in the presence of a proton gradient across the membrane. The chain is V-type ATP synthase subunit I (atpI) from Borreliella burgdorferi (strain ATCC 35210 / DSM 4680 / CIP 102532 / B31) (Borrelia burgdorferi).